The following is a 256-amino-acid chain: Triosephosphate isomerase (256 aa).

12-14 (NWK) contacts substrate. The Electrophile role is filled by H99. E169 functions as the Proton acceptor in the catalytic mechanism. Substrate-binding positions include G175, S214, and 235–236 (GG).

Belongs to the triosephosphate isomerase family. Homodimer.

Its subcellular location is the cytoplasm. The catalysed reaction is D-glyceraldehyde 3-phosphate = dihydroxyacetone phosphate. It functions in the pathway carbohydrate biosynthesis; gluconeogenesis. The protein operates within carbohydrate degradation; glycolysis; D-glyceraldehyde 3-phosphate from glycerone phosphate: step 1/1. Functionally, involved in the gluconeogenesis. Catalyzes stereospecifically the conversion of dihydroxyacetone phosphate (DHAP) to D-glyceraldehyde-3-phosphate (G3P). This Rhizobium etli (strain ATCC 51251 / DSM 11541 / JCM 21823 / NBRC 15573 / CFN 42) protein is Triosephosphate isomerase.